The following is a 434-amino-acid chain: Alpha-enolase (434 aa).

Serine 40 is a Mg(2+) binding site. Substrate contacts are provided by histidine 158 and glutamate 167. Residue glutamate 210 is the Proton donor of the active site. Mg(2+) contacts are provided by aspartate 245, glutamate 293, and aspartate 318. Substrate is bound by residues glutamate 293, aspartate 318, 370-373 (SHRS), and lysine 394.

The protein belongs to the enolase family. In terms of assembly, homodimer. It depends on Mg(2+) as a cofactor.

Its subcellular location is the cytoplasm. The enzyme catalyses (2R)-2-phosphoglycerate = phosphoenolpyruvate + H2O. Its pathway is carbohydrate degradation; glycolysis; pyruvate from D-glyceraldehyde 3-phosphate: step 4/5. The sequence is that of Alpha-enolase from Trachemys scripta elegans (Red-eared slider turtle).